The following is a 708-amino-acid chain: ATP-dependent DNA helicase Hel308 (708 aa).

The Q motif signature appears at Met-1–Thr-29. Residues Gln-28 and Ser-46–Thr-53 each bind ATP. Residues Lys-33–Asn-196 enclose the Helicase ATP-binding domain. Positions Asp-145–His-148 match the DEAH box motif. In terms of domain architecture, Helicase C-terminal spans His-229 to Gly-435.

This sequence belongs to the helicase family. Hel308 subfamily. Monomer.

The catalysed reaction is Couples ATP hydrolysis with the unwinding of duplex DNA by translocating in the 3'-5' direction.. The enzyme catalyses ATP + H2O = ADP + phosphate + H(+). In terms of biological role, DNA-dependent ATPase and 3'-5' DNA helicase that may be involved in repair of stalled replication forks. This is ATP-dependent DNA helicase Hel308 from Saccharolobus solfataricus (strain ATCC 35092 / DSM 1617 / JCM 11322 / P2) (Sulfolobus solfataricus).